The sequence spans 205 residues: Holliday junction branch migration complex subunit RuvA (205 aa).

A domain I region spans residues 1-64 (MIGRLSGILV…EDAQLLYGFI (64 aa)). Positions 65–143 (TKQERALFRL…SLLEASAGSE (79 aa)) are domain II. The tract at residues 144-156 (REFMLQSNYTPAA) is flexible linker. The interval 157–205 (AVDSAEEDAISALLSLGYKPAQASKSVSAAFKEGMSSETLIKAALKSML) is domain III.

The protein belongs to the RuvA family. In terms of assembly, homotetramer. Forms an RuvA(8)-RuvB(12)-Holliday junction (HJ) complex. HJ DNA is sandwiched between 2 RuvA tetramers; dsDNA enters through RuvA and exits via RuvB. An RuvB hexamer assembles on each DNA strand where it exits the tetramer. Each RuvB hexamer is contacted by two RuvA subunits (via domain III) on 2 adjacent RuvB subunits; this complex drives branch migration. In the full resolvosome a probable DNA-RuvA(4)-RuvB(12)-RuvC(2) complex forms which resolves the HJ.

It localises to the cytoplasm. The RuvA-RuvB-RuvC complex processes Holliday junction (HJ) DNA during genetic recombination and DNA repair, while the RuvA-RuvB complex plays an important role in the rescue of blocked DNA replication forks via replication fork reversal (RFR). RuvA specifically binds to HJ cruciform DNA, conferring on it an open structure. The RuvB hexamer acts as an ATP-dependent pump, pulling dsDNA into and through the RuvAB complex. HJ branch migration allows RuvC to scan DNA until it finds its consensus sequence, where it cleaves and resolves the cruciform DNA. The protein is Holliday junction branch migration complex subunit RuvA of Shewanella frigidimarina (strain NCIMB 400).